Consider the following 456-residue polypeptide: Probable glycine dehydrogenase (decarboxylating) subunit 1 (456 aa).

The protein belongs to the GcvP family. N-terminal subunit subfamily. In terms of assembly, the glycine cleavage system is composed of four proteins: P, T, L and H. In this organism, the P 'protein' is a heterodimer of two subunits.

It catalyses the reaction N(6)-[(R)-lipoyl]-L-lysyl-[glycine-cleavage complex H protein] + glycine + H(+) = N(6)-[(R)-S(8)-aminomethyldihydrolipoyl]-L-lysyl-[glycine-cleavage complex H protein] + CO2. The glycine cleavage system catalyzes the degradation of glycine. The P protein binds the alpha-amino group of glycine through its pyridoxal phosphate cofactor; CO(2) is released and the remaining methylamine moiety is then transferred to the lipoamide cofactor of the H protein. The protein is Probable glycine dehydrogenase (decarboxylating) subunit 1 of Legionella pneumophila subsp. pneumophila (strain Philadelphia 1 / ATCC 33152 / DSM 7513).